A 252-amino-acid chain; its full sequence is Ubiquinone/menaquinone biosynthesis C-methyltransferase UbiE (252 aa).

Residues T71, D100, 124 to 125 (DA), and S141 each bind S-adenosyl-L-methionine.

This sequence belongs to the class I-like SAM-binding methyltransferase superfamily. MenG/UbiE family.

The enzyme catalyses a 2-demethylmenaquinol + S-adenosyl-L-methionine = a menaquinol + S-adenosyl-L-homocysteine + H(+). It catalyses the reaction a 2-methoxy-6-(all-trans-polyprenyl)benzene-1,4-diol + S-adenosyl-L-methionine = a 5-methoxy-2-methyl-3-(all-trans-polyprenyl)benzene-1,4-diol + S-adenosyl-L-homocysteine + H(+). The protein operates within quinol/quinone metabolism; menaquinone biosynthesis; menaquinol from 1,4-dihydroxy-2-naphthoate: step 2/2. It functions in the pathway cofactor biosynthesis; ubiquinone biosynthesis. In terms of biological role, methyltransferase required for the conversion of demethylmenaquinol (DMKH2) to menaquinol (MKH2) and the conversion of 2-polyprenyl-6-methoxy-1,4-benzoquinol (DDMQH2) to 2-polyprenyl-3-methyl-6-methoxy-1,4-benzoquinol (DMQH2). This chain is Ubiquinone/menaquinone biosynthesis C-methyltransferase UbiE, found in Caulobacter sp. (strain K31).